The primary structure comprises 218 residues: Small ribosomal subunit protein uS3c (218 aa).

A KH type-2 domain is found at 47 to 118 (VQKEMRISSG…RLNVVITRVA (72 aa)).

This sequence belongs to the universal ribosomal protein uS3 family. As to quaternary structure, part of the 30S ribosomal subunit.

The protein localises to the plastid. The protein resides in the chloroplast. The chain is Small ribosomal subunit protein uS3c (rps3) from Ceratophyllum demersum (Rigid hornwort).